The chain runs to 144 residues: Virulence protein STM3117 (144 aa).

One can recognise a VOC domain in the interval 23 to 143; it reads RIDHLVLTVS…DGNLIEISQY (121 aa).

Is critically involved in promoting the replication of S.typhimurium cells inside host macrophages, suggesting a role in the establishment of bacterial colonization within macrophages. May be involved in the biosynthesis and modification of the peptidoglycan layer of the cell wall. This chain is Virulence protein STM3117, found in Salmonella typhimurium (strain LT2 / SGSC1412 / ATCC 700720).